Consider the following 367-residue polypeptide: Aflatoxin B1 aldehyde reductase member 2 (367 aa).

A compositionally biased stretch (low complexity) spans Met1–Ser31. A disordered region spans residues Met1–Arg45. The transit peptide at Met1–Pro46 directs the protein to the mitochondrion. Ser40 bears the Phosphoserine mark. A Phosphothreonine modification is found at Thr48. Asp80 serves as a coordination point for NADP(+). The Proton donor role is filled by Tyr85. An N6-acetyllysine modification is found at Lys136. His149 contacts substrate. Residues Ser179–Asn180, Gln205, Asn234–Lys244, and Arg258 each bind NADP(+). Lys244 carries the post-translational modification N6-succinyllysine. Substrate is bound by residues Tyr268 and Arg271. Ser326–Asn334 contacts NADP(+). Residue Arg367 coordinates substrate.

Belongs to the aldo/keto reductase family. Aldo/keto reductase 2 subfamily. In terms of assembly, homodimer. Expressed in liver, kidney, testis and brain with low levels in skeletal muscle, spleen, heart and lung.

It is found in the mitochondrion. The protein resides in the golgi apparatus. The protein localises to the cytoplasm. It catalyses the reaction 4-hydroxybutanoate + NADP(+) = succinate semialdehyde + NADPH + H(+). With respect to regulation, inhibited by citrate, succinate and tartrate. Functionally, catalyzes the NADPH-dependent reduction of succinic semialdehyde to gamma-hydroxybutyrate. May have an important role in producing the neuromodulator gamma-hydroxybutyrate (GHB). Has broad substrate specificity. Can reduce the dialdehyde protein-binding form of aflatoxin B1 (AFB1) to the non-binding AFB1 dialcohol. May be involved in protection of liver against the toxic and carcinogenic effects of AFB1, a potent hepatocarcinogen. The polypeptide is Aflatoxin B1 aldehyde reductase member 2 (Mus musculus (Mouse)).